Reading from the N-terminus, the 1235-residue chain is Receptor-type adenylate cyclase ESAG 4 (1235 aa).

Residues 1-20 are disordered; the sequence is MNMLHLSDRNASLAPSGGEH. At 1 to 32 the chain is on the cytoplasmic side; sequence MNMLHLSDRNASLAPSGGEHSLPTGGAVCRDA. A helical transmembrane segment spans residues 33–53; that stretch reads MDILPVILRAPVALLLLLVVL. Residues 54-858 lie on the Extracellular side of the membrane; it reads PQLSVGAEAN…SNAGRISGAS (805 aa). N-linked (GlcNAc...) asparagine glycosylation is found at Asn-63, Asn-90, Asn-97, Asn-362, Asn-531, Asn-566, Asn-705, and Asn-830. A helical membrane pass occupies residues 859–879; the sequence is LVGIIIGGALALFLVVALGVV. Residues 880-1235 are Cytoplasmic-facing; that stretch reads PYFFLRNTVI…VSSQVEERLL (356 aa). The region spanning 900–1054 is the Guanylate cyclase domain; it reads TLIFTDIESS…RTSNMAARTE (155 aa). Positions 905 and 948 each coordinate Mg(2+).

Belongs to the adenylyl cyclase class-3 family. The cofactor is Mg(2+).

It localises to the membrane. It catalyses the reaction ATP = 3',5'-cyclic AMP + diphosphate. Could act as a receptor for an unknown ligand. The polypeptide is Receptor-type adenylate cyclase ESAG 4 (ESAG4) (Trypanosoma brucei brucei).